A 202-amino-acid chain; its full sequence is Small heat shock protein hspG5 (202 aa).

One can recognise a sHSP domain in the interval 31-202; that stretch reads KTIIDIIPPM…YSNTIKININ (172 aa). Positions 96–138 are disordered; that stretch reads TSSTTLDSKEDEASIEEFEDDIKPKSKSTVTTTATKENKEDEN.

The protein belongs to the small heat shock protein (HSP20) family.

The chain is Small heat shock protein hspG5 (hspG5) from Dictyostelium discoideum (Social amoeba).